Here is a 288-residue protein sequence, read N- to C-terminus: Pyrroline-5-carboxylate reductase 3 (288 aa).

This sequence belongs to the pyrroline-5-carboxylate reductase family. In terms of assembly, homodecamer; composed of 5 homodimers.

The protein resides in the cytoplasm. The enzyme catalyses L-proline + NADP(+) = (S)-1-pyrroline-5-carboxylate + NADPH + 2 H(+). The catalysed reaction is L-proline + NAD(+) = (S)-1-pyrroline-5-carboxylate + NADH + 2 H(+). It functions in the pathway amino-acid biosynthesis; L-proline biosynthesis; L-proline from L-glutamate 5-semialdehyde: step 1/1. Its function is as follows. Oxidoreductase that catalyzes the last step in proline biosynthesis, which corresponds to the reduction of pyrroline-5-carboxylate (P5C) to L-proline using NAD(P)H. Proline is synthesized from either glutamate or ornithine; both are converted to P5C, and then to proline via pyrroline-5-carboxylate reductases (PYCRs). PYCR3 is exclusively linked to the biosynthesis of proline from ornithine. The sequence is that of Pyrroline-5-carboxylate reductase 3 from Danio rerio (Zebrafish).